A 749-amino-acid polypeptide reads, in one-letter code: G-type lectin S-receptor-like serine/threonine-protein kinase At1g61460 (749 aa).

Positions 1-25 are cleaved as a signal peptide; that stretch reads MRITFFASLLLFTNTIFISFSFAIA. In terms of domain architecture, Bulb-type lectin spans 26 to 145; it reads GINKESPLSI…FSGRTLWQSF (120 aa). The Extracellular portion of the chain corresponds to 26-392; sequence GINKESPLSI…ELGGNKRKKT (367 aa). Asparagine 54, asparagine 95, asparagine 118, and asparagine 135 each carry an N-linked (GlcNAc...) asparagine glycan. One can recognise an EGF-like; atypical domain in the interval 247–280; sequence PAHSCDYYGVCGPFGICVKSVCKCFKGFIPKYIE. 2 cysteine pairs are disulfide-bonded: cysteine 251/cysteine 263 and cysteine 257/cysteine 268. N-linked (GlcNAc...) asparagine glycans are attached at residues asparagine 286, asparagine 302, and asparagine 341. In terms of domain architecture, PAN spans 299–381; sequence CQENSTKKDA…GEILSIRLAR (83 aa). Disulfide bonds link cysteine 334–cysteine 355 and cysteine 338–cysteine 344. The helical transmembrane segment at 393–413 threads the bilayer; that stretch reads ITASIVSLSLFLILGSTAFGF. The Cytoplasmic segment spans residues 414-749; the sequence is WRYRVKHNAS…EMTKSVILGR (336 aa). The Protein kinase domain maps to 454–721; it reads FSLSNKLGQG…DLPSPKQPTF (268 aa). Residues 460-468 and lysine 482 contribute to the ATP site; that span reads LGQGGFGSV. The segment at 543–560 is caM-binding; that stretch reads RKRLEIDWPKRFDIIQGI. Aspartate 579 (proton acceptor) is an active-site residue.

Belongs to the protein kinase superfamily. Ser/Thr protein kinase family.

The protein resides in the cell membrane. It carries out the reaction L-seryl-[protein] + ATP = O-phospho-L-seryl-[protein] + ADP + H(+). The catalysed reaction is L-threonyl-[protein] + ATP = O-phospho-L-threonyl-[protein] + ADP + H(+). The polypeptide is G-type lectin S-receptor-like serine/threonine-protein kinase At1g61460 (Arabidopsis thaliana (Mouse-ear cress)).